The primary structure comprises 293 residues: Movement protein BC1 (293 aa).

This sequence belongs to the begomovirus movement protein BC1 family. Binds to dimeric supercoiled plasmid DNA. Phosphorylated.

The protein localises to the host cell membrane. The protein resides in the host microsome membrane. Its subcellular location is the host endoplasmic reticulum membrane. Functionally, transports viral genome to neighboring plant cells directly through plasmosdesmata, without any budding. The movement protein allows efficient cell to cell propagation, by bypassing the host cell wall barrier. Begomovirus genome is shuttled out of nucleus by Nuclear shuttle protein (NSP) and the movement protein transports the DNA-NSP complex to cell plasmodesmata and facilitates further movement across the cell wall. The polypeptide is Movement protein BC1 (Potato yellow mosaic virus (isolate Venezuela) (PYMV)).